The primary structure comprises 133 residues: Small ribosomal subunit protein uS8 (133 aa).

The protein belongs to the universal ribosomal protein uS8 family. As to quaternary structure, part of the 30S ribosomal subunit. Contacts proteins S5 and S12.

In terms of biological role, one of the primary rRNA binding proteins, it binds directly to 16S rRNA central domain where it helps coordinate assembly of the platform of the 30S subunit. This chain is Small ribosomal subunit protein uS8, found in Thermosynechococcus vestitus (strain NIES-2133 / IAM M-273 / BP-1).